A 154-amino-acid polypeptide reads, in one-letter code: Cytochrome c' (154 aa).

A signal peptide spans 1–23 (MKHVLASTAAGLMALGLASSAIA). The heme c site is built by Arg35, Gln36, Arg95, Cys144, Cys147, and His148.

Homodimer. In terms of processing, binds 1 heme c group covalently per subunit.

Cytochrome c' is the most widely occurring bacterial c-type cytochrome. Cytochromes c' are high-spin proteins and the heme has no sixth ligand. Their exact function is not known. The chain is Cytochrome c' (cycA) from Allochromatium vinosum (strain ATCC 17899 / DSM 180 / NBRC 103801 / NCIMB 10441 / D) (Chromatium vinosum).